Consider the following 215-residue polypeptide: 3-isopropylmalate dehydratase small subunit (215 aa).

It belongs to the LeuD family. LeuD type 1 subfamily. As to quaternary structure, heterodimer of LeuC and LeuD.

It catalyses the reaction (2R,3S)-3-isopropylmalate = (2S)-2-isopropylmalate. It participates in amino-acid biosynthesis; L-leucine biosynthesis; L-leucine from 3-methyl-2-oxobutanoate: step 2/4. Functionally, catalyzes the isomerization between 2-isopropylmalate and 3-isopropylmalate, via the formation of 2-isopropylmaleate. The chain is 3-isopropylmalate dehydratase small subunit from Xanthomonas campestris pv. campestris (strain 8004).